The following is a 500-amino-acid chain: NAD(P)H-quinone oxidoreductase chain 4, chloroplastic (500 aa).

The next 14 membrane-spanning stretches (helical) occupy residues 4–24 (FPWL…IFLF), 31–51 (VIKW…TYAF), 84–104 (GFSL…TLAA), 111–129 (SRLF…IGLF), 134–154 (LLLF…LLSM), 167–187 (FILY…GIAL), 208–228 (ALEI…SPII), 242–262 (HYST…YGLV), 272–292 (AHSI…IYAA), 305–325 (IAYS…SISD), 330–350 (GAIL…FLAG), 386–406 (LALP…GIIT), 416–436 (ILIT…LLSM), and 463–483 (FVSI…DFVF).

The protein belongs to the complex I subunit 4 family.

It localises to the plastid. It is found in the chloroplast thylakoid membrane. The catalysed reaction is a plastoquinone + NADH + (n+1) H(+)(in) = a plastoquinol + NAD(+) + n H(+)(out). The enzyme catalyses a plastoquinone + NADPH + (n+1) H(+)(in) = a plastoquinol + NADP(+) + n H(+)(out). The chain is NAD(P)H-quinone oxidoreductase chain 4, chloroplastic from Manihot esculenta (Cassava).